A 338-amino-acid chain; its full sequence is Probable protein S-acyltransferase 1 (338 aa).

Helical transmembrane passes span 32–52 (DASSLLLTTCMIGGPAIAFSI) and 68–88 (LTLIGAILLTFMAFTFLFLTS). A DHHC domain is found at 142-192 (KFCDTCQLYRPPRAFHCSICNNCVQRFDHHCPWVGQCIALRNYPFFVCFLS). The active-site S-palmitoyl cysteine intermediate is Cys-172. A run of 2 helical transmembrane segments spans residues 186-206 (FFVCFLSCSTLLCIYVFVFSW) and 225-245 (ILGVLGLYCFVSVWFVGGLTV). Residues 319-338 (FGPKDTKMSSGKSDSEARER) form a disordered region. The segment covering 320–338 (GPKDTKMSSGKSDSEARER) has biased composition (basic and acidic residues).

The protein belongs to the DHHC palmitoyltransferase family.

The protein resides in the endosome membrane. It carries out the reaction L-cysteinyl-[protein] + hexadecanoyl-CoA = S-hexadecanoyl-L-cysteinyl-[protein] + CoA. In terms of biological role, palmitoyl acyltransferase. The chain is Probable protein S-acyltransferase 1 (PAT01) from Arabidopsis thaliana (Mouse-ear cress).